The chain runs to 586 residues: Acetylcholinesterase (586 aa).

An N-terminal signal peptide occupies residues 1–21; the sequence is MNLLVTSSLGVLLHLVVLCQA. Asn80 carries an N-linked (GlcNAc...) asparagine glycan. Cys88 and Cys115 are disulfide-bonded. The Acyl-ester intermediate role is filled by Ser221. A disulfide bond links Cys275 and Cys286. Glu348 serves as the catalytic Charge relay system. Cys423 and Cys542 are joined by a disulfide. The N-linked (GlcNAc...) asparagine glycan is linked to Asn437. Catalysis depends on His461, which acts as the Charge relay system. N-linked (GlcNAc...) asparagine glycans are attached at residues Asn478 and Asn554. Ser564 carries the GPI-anchor amidated serine lipid modification. The propeptide at 565 to 586 is removed in mature form; it reads SGTSSSKGIIFYVLFSILYLIF.

This sequence belongs to the type-B carboxylesterase/lipase family. Isoform H form is a homodimer; the asymmetric form is a disulfide-bonded oligomer composed of a collagenic subunit (Q) and a variable number of T catalytic subunits. Post-translationally, an interchain disulfide bond is present in what becomes position 593 of the T isoform. Found in the synapses and to a lower extent in extrajunctional areas of muscle and nerve, and on erythrocyte membranes.

The protein localises to the cell membrane. It is found in the synapse. It catalyses the reaction acetylcholine + H2O = choline + acetate + H(+). Its activity is regulated as follows. Inhibited by substrate concentrations above 0.5 mM. Terminates signal transduction at the neuromuscular junction by rapid hydrolysis of the acetylcholine released into the synaptic cleft. May be involved in cell-cell interactions. In Tetronarce californica (Pacific electric ray), this protein is Acetylcholinesterase (ache).